The chain runs to 312 residues: uncharacterized protein (312 aa).

This is an uncharacterized protein from Escherichia coli O157:H7.